The sequence spans 95 residues: Alpha-conotoxin VxXXB (95 aa).

Residues 1-24 form the signal peptide; the sequence is MPKLAVVLLVLLILPLSYFDAAGG. A propeptide spanning residues 25–45 is cleaved from the precursor; the sequence is QAVQGDWRGNRLARDLQRGGR. Residues E48 and E50 each carry the 4-carboxyglutamate modification. P59 carries the post-translational modification 4-hydroxyproline; partial. Intrachain disulfides connect C64–C73, C69–C81, C74–C91, and C79–C93. P75 carries the post-translational modification 4-hydroxyproline; partial. P94 is subject to 4-hydroxyproline; partial. P94 carries the proline amide; in form [desGly-95]VxXXB modification.

The protein belongs to the conotoxin D superfamily. In terms of assembly, homodimer. Pseudo-homodimer (identical sequence, different post-translational modifications). Expressed by the venom duct.

Its subcellular location is the secreted. Its function is as follows. Alpha-conotoxins act on postsynaptic membranes, they bind to the nicotinic acetylcholine receptors (nAChR) and thus inhibit them. Through its two C-terminal domains, this homodimeric protein would bind to two nAChR allosteric sites, located outside the nAChR C-loop of the principal binding face and at the adjacent binding interface in a clockwise direction. It specifically blocks mammalian neuronal nAChR of the alpha-7/CHRNA7 (IC(50)=0.4 nM), alpha-3-beta-2/CHRNA3-CHRNB2 (IC(50)=8.4 nM) and alpha-4-beta-2/CHRNA4-CHRNB2 (IC(50)=228 nM) subtypes. It inhibits alpha-7/CHRNA7, alpha-3-beta-2/CHRNA3-CHRNB2 and alpha-4-beta-2/CHRNA4-CHRNB2 nAChR subtypes more efficiently than VxXXA and VxXXC. The sequence is that of Alpha-conotoxin VxXXB from Conus vexillum (Flag cone).